Consider the following 398-residue polypeptide: Small ribosomal subunit protein uS3m (398 aa).

The protein belongs to the universal ribosomal protein uS3 family. Component of the mitochondrial small ribosomal subunit (mt-SSU). Mature yeast 74S mitochondrial ribosomes consist of a small (37S) and a large (54S) subunit. The 37S small subunit contains a 15S ribosomal RNA (15S mt-rRNA) and 34 different proteins. The 54S large subunit contains a 21S rRNA (21S mt-rRNA) and 46 different proteins. uS3m, uS4m and uS5m form the narrow entry site of the mRNA channel.

The protein resides in the mitochondrion. Component of the mitochondrial ribosome (mitoribosome), a dedicated translation machinery responsible for the synthesis of mitochondrial genome-encoded proteins, including at least some of the essential transmembrane subunits of the mitochondrial respiratory chain. The mitoribosomes are attached to the mitochondrial inner membrane and translation products are cotranslationally integrated into the membrane. uS3m is essential for mitochondrial protein synthesis and required for the maturation of small ribosomal subunits. The protein is Small ribosomal subunit protein uS3m (VAR1) of Saccharomyces cerevisiae (strain ATCC 204508 / S288c) (Baker's yeast).